Reading from the N-terminus, the 129-residue chain is MARKTNTRKKRVKKNIETGVAHIRSTFNNTIVTLTDTHGNAISWSSAGALGFRGSRKSTPFAAQMAAETAAKAAMEHGLKSLEVTVKGPGAGREAAIRALQAAGLEVTAIRDVTPVPHNGCRPPKRRRV.

The protein belongs to the universal ribosomal protein uS11 family. In terms of assembly, part of the 30S ribosomal subunit. Interacts with proteins S7 and S18. Binds to IF-3.

Its function is as follows. Located on the platform of the 30S subunit, it bridges several disparate RNA helices of the 16S rRNA. Forms part of the Shine-Dalgarno cleft in the 70S ribosome. The polypeptide is Small ribosomal subunit protein uS11 (Bacillus cytotoxicus (strain DSM 22905 / CIP 110041 / 391-98 / NVH 391-98)).